Reading from the N-terminus, the 148-residue chain is Large ribosomal subunit protein bL9 (148 aa).

The protein belongs to the bacterial ribosomal protein bL9 family.

Binds to the 23S rRNA. In Pseudomonas aeruginosa (strain LESB58), this protein is Large ribosomal subunit protein bL9.